Here is a 295-residue protein sequence, read N- to C-terminus: UDP-N-acetylenolpyruvoylglucosamine reductase (295 aa).

Residues 24 to 188 (KVGGNAEIFF…LKAVFKVNKG (165 aa)) form the FAD-binding PCMH-type domain. Arg168 is a catalytic residue. The active-site Proton donor is the Ser217. The active site involves Glu287.

Belongs to the MurB family. FAD is required as a cofactor.

It is found in the cytoplasm. It carries out the reaction UDP-N-acetyl-alpha-D-muramate + NADP(+) = UDP-N-acetyl-3-O-(1-carboxyvinyl)-alpha-D-glucosamine + NADPH + H(+). The protein operates within cell wall biogenesis; peptidoglycan biosynthesis. Its function is as follows. Cell wall formation. The chain is UDP-N-acetylenolpyruvoylglucosamine reductase from Rickettsia felis (strain ATCC VR-1525 / URRWXCal2) (Rickettsia azadi).